A 1129-amino-acid chain; its full sequence is Protein LANA1 (1129 aa).

Disordered regions lie at residues 1 to 988 (MAPP…PVPY) and 1110 to 1129 (LPLTQPGENQGPGDSPQEMT). Composition is skewed to basic and acidic residues over residues 28–41 (RSPERCDLGDDLHL) and 48–58 (VADSVDGRECG). A compositionally biased stretch (pro residues) spans 85–104 (PVAPIPSPAPATPLPPPALL). Over residues 139 to 156 (SPESSQRPPLSSPTGRPD) the composition is skewed to polar residues. Positions 161–185 (MRPPPSQQTTPPHSPTTPPPEPPSK) are enriched in pro residues. Positions 186–197 (SSPDSLAPSTLR) are enriched in low complexity. Residues 207–217 (PQGPSTLNPIC) show a composition bias toward polar residues. Over residues 263 to 275 (PISIGSSSPSEGS) the composition is skewed to low complexity. Composition is skewed to basic and acidic residues over residues 292–301 (EASKNEKECS) and 314–323 (EISKESQVDK). A compositionally biased stretch (acidic residues) spans 324-419 (DDNDNKDDEE…DKKEDEEDGG (96 aa)). Low complexity predominate over residues 431–471 (QQQQEPQQQEPQQQEPQQQEPQQQEPQQQEPQQQEPQQQEP). Positions 472–528 (QQREPQQREPQQREPQQREPQQREPQQREPQQREPQQREPQQREPQQREPQQREPQQ) are enriched in basic and acidic residues. Over residues 529–596 (REPQQQEPQQ…QQQEPQQQDE (68 aa)) the composition is skewed to low complexity. Over residues 597 to 888 (QQQDEQQQDE…QELEEVEEQE (292 aa)) the composition is skewed to acidic residues. Residues 924-934 (THEQIASSPPG) are compositionally biased toward polar residues. Over residues 962–979 (PGVRMRRVPVTHPKKPHP) the composition is skewed to basic residues. Residues 1008–1129 (FLGKDGRRDP…GPGDSPQEMT (122 aa)) form a DNA-binding domain region.

In terms of assembly, homooligomer. Interacts with host BRD2. Interacts with host RELA, ELOB, ELOC and CUL5; these interactions induce the proteasomal degradation of host RELA. Interacts with host TRIM28 and NFE2L2/NRF2; these interactions are essential for the shutdown of lytic gene expression during the early stage of infection. Interacts (via N-terminus) with host histones H2A and H2B; these interactions are essential to dock LANA1 onto chromosomes. Interacts with host BUB1 and PCNA. Interacts with host NAP1L1; this interaction is required for LANA1-dependent DNA replication. Interacts with components of the host MLL1 complex KMT2A and WDR5.

It is found in the host nucleus. In terms of biological role, multifunctional protein that plays a role in the replication and long-term persistence of the viral episomal genome in dividing cells. Binds to mitotic chromosomes via its N-terminal region and to a 16-bp imperfect palindrome within the origin of replication (oriP) located in the viral terminal repeat (TR) through its C-terminal. Tethers viral episomes to chromosomes during mitosis. Plays a critical role in the shutdown of lytic gene expression during the early stage of infection by interacting with host TRIM28. Also plays a role in the repression of host NF-kappa-B activity upon TNF-alpha stimulation by promoting the proteasomal degradation of host RELA. Promotes nuclear localization and cleavage of host STAT6 leading to constitutive activation of the IL13/STAT6 signaling pathway to promote viral latency. Interacts with and modulates the histone methyltransferase MLL1 complex activity, leading to its recruitment on viral DNA terminal repeats changing the dynamic of histone H3 methylated 'Lys-4'(H3K4me) profile during the initial hours following infection. This chain is Protein LANA1 (LANA1), found in Homo sapiens (Human).